We begin with the raw amino-acid sequence, 127 residues long: Large ribosomal subunit protein bL17 (127 aa).

It belongs to the bacterial ribosomal protein bL17 family. Part of the 50S ribosomal subunit. Contacts protein L32.

The protein is Large ribosomal subunit protein bL17 of Pelobacter propionicus (strain DSM 2379 / NBRC 103807 / OttBd1).